Consider the following 217-residue polypeptide: Zinc finger CCHC-type and RNA-binding motif-containing protein 1 (217 aa).

The RRM domain occupies 10–88 (STVYVSNLPF…RVIKASIAID (79 aa)). The CCHC-type zinc-finger motif lies at 105-122 (SKCYECGESGHLSYACPK). Residues 120-217 (CPKNMLGERE…YFSDEEELSD (98 aa)) are disordered. A compositionally biased stretch (acidic residues) spans 145–163 (PEEEIEEVEESEDEGEDPA). Serine 155, serine 210, and serine 216 each carry phosphoserine.

Component of the U11/U12 snRNPs that are part of the U12-type spliceosome. Interacts with ZRSR1.

It is found in the nucleus. The protein localises to the nucleoplasm. The chain is Zinc finger CCHC-type and RNA-binding motif-containing protein 1 (ZCRB1) from Bos taurus (Bovine).